A 561-amino-acid chain; its full sequence is uncharacterized protein (561 aa).

Positions 314–323 are enriched in low complexity; sequence ANNGSGDSSS. The disordered stretch occupies residues 314 to 366; it reads ANNGSGDSSSTALNNESPNTTPKSRTFFSPKGHRRNSSHVSSLTSRSTKKPIT. Residues 324–340 are compositionally biased toward polar residues; the sequence is TALNNESPNTTPKSRTF. Serine 514 is subject to Phosphoserine.

It is found in the cytoplasm. This is an uncharacterized protein from Saccharomyces cerevisiae (strain ATCC 204508 / S288c) (Baker's yeast).